Reading from the N-terminus, the 502-residue chain is Lysine--tRNA ligase (502 aa).

Mg(2+) contacts are provided by Glu-398 and Glu-405.

Belongs to the class-II aminoacyl-tRNA synthetase family. In terms of assembly, homodimer. Mg(2+) is required as a cofactor.

Its subcellular location is the cytoplasm. The enzyme catalyses tRNA(Lys) + L-lysine + ATP = L-lysyl-tRNA(Lys) + AMP + diphosphate. This Thermotoga maritima (strain ATCC 43589 / DSM 3109 / JCM 10099 / NBRC 100826 / MSB8) protein is Lysine--tRNA ligase (lysS).